Here is a 263-residue protein sequence, read N- to C-terminus: L-aspartate dehydrogenase (263 aa).

Positions 120 and 186 each coordinate NAD(+). Histidine 216 is an active-site residue.

Belongs to the L-aspartate dehydrogenase family.

The catalysed reaction is L-aspartate + NADP(+) + H2O = oxaloacetate + NH4(+) + NADPH + H(+). The enzyme catalyses L-aspartate + NAD(+) + H2O = oxaloacetate + NH4(+) + NADH + H(+). Its pathway is cofactor biosynthesis; NAD(+) biosynthesis; iminoaspartate from L-aspartate (dehydrogenase route): step 1/1. In terms of biological role, specifically catalyzes the NAD or NADP-dependent dehydrogenation of L-aspartate to iminoaspartate. The polypeptide is L-aspartate dehydrogenase (Psychrobacter cryohalolentis (strain ATCC BAA-1226 / DSM 17306 / VKM B-2378 / K5)).